A 381-amino-acid polypeptide reads, in one-letter code: Probable peptidoglycan glycosyltransferase FtsW (381 aa).

The next 9 membrane-spanning stretches (helical) occupy residues 16–36 (LVLLLMVVALTSFGIVMVYSA), 56–76 (LIFALVGCVGALVTMRIDYQL), 80–100 (WAVPLLFVSLILLVLVLIPGI), 145–165 (LLSAGFLPYMVVLMILLGLLL), 168–188 (PDMGAALTLAAVTIIMLFAAG), 191–211 (LIFILGSGMVAMPFVVYLVVH), 274–294 (VIGEELGFIGVIVIIGMFFIL), 312–332 (FLALGIAVLFAIEAVVNMAVV), and 343–363 (LPFLSYGGSSLLISLFAVGIL).

Belongs to the SEDS family. FtsW subfamily.

It is found in the cell inner membrane. The enzyme catalyses [GlcNAc-(1-&gt;4)-Mur2Ac(oyl-L-Ala-gamma-D-Glu-L-Lys-D-Ala-D-Ala)](n)-di-trans,octa-cis-undecaprenyl diphosphate + beta-D-GlcNAc-(1-&gt;4)-Mur2Ac(oyl-L-Ala-gamma-D-Glu-L-Lys-D-Ala-D-Ala)-di-trans,octa-cis-undecaprenyl diphosphate = [GlcNAc-(1-&gt;4)-Mur2Ac(oyl-L-Ala-gamma-D-Glu-L-Lys-D-Ala-D-Ala)](n+1)-di-trans,octa-cis-undecaprenyl diphosphate + di-trans,octa-cis-undecaprenyl diphosphate + H(+). It functions in the pathway cell wall biogenesis; peptidoglycan biosynthesis. Its function is as follows. Peptidoglycan polymerase that is essential for cell division. This Trichlorobacter lovleyi (strain ATCC BAA-1151 / DSM 17278 / SZ) (Geobacter lovleyi) protein is Probable peptidoglycan glycosyltransferase FtsW.